The chain runs to 152 residues: Large ribosomal subunit protein bL9 (152 aa).

Belongs to the bacterial ribosomal protein bL9 family.

Binds to the 23S rRNA. The protein is Large ribosomal subunit protein bL9 of Prochlorococcus marinus (strain MIT 9313).